A 215-amino-acid chain; its full sequence is Octanoyltransferase (215 aa).

A BPL/LPL catalytic domain is found at 31-206 (TTAPDEIWLV…QLVKHLDYAE (176 aa)). Residues 70–77 (RGGQVTYH), 137–139 (SLG), and 150–152 (GLA) contribute to the substrate site. C168 acts as the Acyl-thioester intermediate in catalysis.

This sequence belongs to the LipB family.

It is found in the cytoplasm. It carries out the reaction octanoyl-[ACP] + L-lysyl-[protein] = N(6)-octanoyl-L-lysyl-[protein] + holo-[ACP] + H(+). It participates in protein modification; protein lipoylation via endogenous pathway; protein N(6)-(lipoyl)lysine from octanoyl-[acyl-carrier-protein]: step 1/2. Its function is as follows. Catalyzes the transfer of endogenously produced octanoic acid from octanoyl-acyl-carrier-protein onto the lipoyl domains of lipoate-dependent enzymes. Lipoyl-ACP can also act as a substrate although octanoyl-ACP is likely to be the physiological substrate. This chain is Octanoyltransferase, found in Pseudomonas fluorescens (strain Pf0-1).